Consider the following 281-residue polypeptide: 2,3,4,5-tetrahydropyridine-2,6-dicarboxylate N-succinyltransferase (281 aa).

Substrate-binding residues include Arg-108 and Asp-145.

This sequence belongs to the transferase hexapeptide repeat family. As to quaternary structure, homotrimer.

The protein localises to the cytoplasm. It carries out the reaction (S)-2,3,4,5-tetrahydrodipicolinate + succinyl-CoA + H2O = (S)-2-succinylamino-6-oxoheptanedioate + CoA. The protein operates within amino-acid biosynthesis; L-lysine biosynthesis via DAP pathway; LL-2,6-diaminopimelate from (S)-tetrahydrodipicolinate (succinylase route): step 1/3. In Nitrobacter winogradskyi (strain ATCC 25391 / DSM 10237 / CIP 104748 / NCIMB 11846 / Nb-255), this protein is 2,3,4,5-tetrahydropyridine-2,6-dicarboxylate N-succinyltransferase.